The following is a 216-amino-acid chain: [5-(aminomethyl)furan-3-yl]methyl phosphate kinase (216 aa).

Residues Lys-5–Ser-9, Gly-39, Asp-142, Tyr-147–Gly-152, and Gly-166 each bind ATP.

It belongs to the MfnE family. Homotrimer. Mg(2+) is required as a cofactor.

The enzyme catalyses [5-(aminomethyl)-3-furyl]methyl phosphate + ATP = [5-(aminomethyl)furan-3-yl]methyl diphosphate + ADP. Its pathway is cofactor biosynthesis; methanofuran biosynthesis. With respect to regulation, inhibited by EDTA. Functionally, catalyzes the formation of 5-(aminomethyl)-3-furanmethanol diphosphate (F1-PP) from 5-(aminomethyl)-3-furanmethanol phosphate (F1-P) and ATP. In vitro, can also act as an adenylate kinase that catalyzes the transfer of a phosphoryl group from ATP to AMP, generating two molecules of ADP. This chain is [5-(aminomethyl)furan-3-yl]methyl phosphate kinase, found in Methanocaldococcus jannaschii (strain ATCC 43067 / DSM 2661 / JAL-1 / JCM 10045 / NBRC 100440) (Methanococcus jannaschii).